Here is a 496-residue protein sequence, read N- to C-terminus: Glycerol kinase (496 aa).

Residue Thr12 participates in ADP binding. Residues Thr12, Thr13, and Ser14 each contribute to the ATP site. Thr12 is a binding site for sn-glycerol 3-phosphate. Arg16 serves as a coordination point for ADP. Sn-glycerol 3-phosphate-binding residues include Arg82, Glu83, and Tyr134. Arg82, Glu83, and Tyr134 together coordinate glycerol. At His230 the chain carries Phosphohistidine; by HPr. Residue Asp244 participates in sn-glycerol 3-phosphate binding. Glycerol is bound by residues Asp244 and Gln245. 2 residues coordinate ADP: Thr266 and Gly309. Positions 266, 309, 313, and 410 each coordinate ATP. ADP contacts are provided by Gly410 and Asn414.

It belongs to the FGGY kinase family. In terms of processing, the phosphoenolpyruvate-dependent sugar phosphotransferase system (PTS), including enzyme I, and histidine-containing protein (HPr) are required for the phosphorylation of, which leads to the activation of the enzyme.

It carries out the reaction glycerol + ATP = sn-glycerol 3-phosphate + ADP + H(+). It participates in polyol metabolism; glycerol degradation via glycerol kinase pathway; sn-glycerol 3-phosphate from glycerol: step 1/1. Inhibited by fructose 1,6-bisphosphate and p-chloromercuribenzoate (PCMB). Its function is as follows. Key enzyme in the regulation of glycerol uptake and metabolism. Catalyzes the phosphorylation of glycerol to yield sn-glycerol 3-phosphate. The sequence is that of Glycerol kinase from Thermus thermophilus.